We begin with the raw amino-acid sequence, 368 residues long: Phospho-N-acetylmuramoyl-pentapeptide-transferase (368 aa).

10 consecutive transmembrane segments (helical) span residues 34-54 (GAVVTGALFVFLFGPWIIDHL), 79-99 (TPTMGGLMILSGLVVSTVLWA), 102-122 (LNPYVWIVLAVTLGFGFVGFY), 140-160 (ARILIEAGIALVACYALVRLG), 176-196 (LVIKFGWMYVIFGAFVIVGAG), 207-227 (GLAIVPVMIASASFGLIAYLA), 247-267 (LAVLCGAVLGAGLGFLWFNAP), 271-291 (IFMGDTGSLALGGMLGSIAVA), 296-316 (IVLAVIGGLFVLEAVSVIVQV), and 345-365 (QIVIRFWIISVMLALVGLSTL).

This sequence belongs to the glycosyltransferase 4 family. MraY subfamily. The cofactor is Mg(2+).

The protein resides in the cell inner membrane. The enzyme catalyses UDP-N-acetyl-alpha-D-muramoyl-L-alanyl-gamma-D-glutamyl-meso-2,6-diaminopimeloyl-D-alanyl-D-alanine + di-trans,octa-cis-undecaprenyl phosphate = di-trans,octa-cis-undecaprenyl diphospho-N-acetyl-alpha-D-muramoyl-L-alanyl-D-glutamyl-meso-2,6-diaminopimeloyl-D-alanyl-D-alanine + UMP. It functions in the pathway cell wall biogenesis; peptidoglycan biosynthesis. Functionally, catalyzes the initial step of the lipid cycle reactions in the biosynthesis of the cell wall peptidoglycan: transfers peptidoglycan precursor phospho-MurNAc-pentapeptide from UDP-MurNAc-pentapeptide onto the lipid carrier undecaprenyl phosphate, yielding undecaprenyl-pyrophosphoryl-MurNAc-pentapeptide, known as lipid I. This is Phospho-N-acetylmuramoyl-pentapeptide-transferase from Bradyrhizobium sp. (strain BTAi1 / ATCC BAA-1182).